Here is a 364-residue protein sequence, read N- to C-terminus: Dihydroorotate dehydrogenase (quinone) (364 aa).

FMN-binding positions include 61–65 (AGFDK) and threonine 85. Substrate is bound at residue lysine 65. 110 to 114 (NRMGF) contacts substrate. Positions 139 and 170 each coordinate FMN. Residue asparagine 170 participates in substrate binding. Residue serine 173 is the Nucleophile of the active site. Asparagine 175 is a binding site for substrate. Positions 214 and 242 each coordinate FMN. 243–244 (NT) contributes to the substrate binding site. FMN contacts are provided by residues glycine 266, glycine 295, and 316–317 (YS).

It belongs to the dihydroorotate dehydrogenase family. Type 2 subfamily. Monomer. Requires FMN as cofactor.

The protein resides in the cell membrane. The enzyme catalyses (S)-dihydroorotate + a quinone = orotate + a quinol. Its pathway is pyrimidine metabolism; UMP biosynthesis via de novo pathway; orotate from (S)-dihydroorotate (quinone route): step 1/1. In terms of biological role, catalyzes the conversion of dihydroorotate to orotate with quinone as electron acceptor. The chain is Dihydroorotate dehydrogenase (quinone) from Rhodopseudomonas palustris (strain TIE-1).